Consider the following 101-residue polypeptide: Small ribosomal subunit protein uS10 (101 aa).

It belongs to the universal ribosomal protein uS10 family. Part of the 30S ribosomal subunit.

Functionally, involved in the binding of tRNA to the ribosomes. The polypeptide is Small ribosomal subunit protein uS10 (Mycobacterium bovis (strain ATCC BAA-935 / AF2122/97)).